We begin with the raw amino-acid sequence, 793 residues long: Putative potassium transporter 12 (793 aa).

Over 1–54 (MASISDSETTNHGSIWDLDQNLDQPMDEEASRLKNMYTEKKFSSILLLRLAFQS) the chain is Cytoplasmic. The chain crosses the membrane as a helical span at residues 55-75 (LGVVFGDLGTSPLYVFYNIFP). At 76 to 87 (HGVDDDEDVIGA) the chain is on the extracellular side. The helical transmembrane segment at 88–108 (LSLIIYTLTLIPLMKYVFVVL) threads the bilayer. Residues 109–175 (RANDNGQGGT…EGHVYKKNCL (67 aa)) are Cytoplasmic-facing. Residues 176–196 (LILVLIGTCTAIGDGILTPAI) traverse the membrane as a helical segment. The Extracellular portion of the chain corresponds to 197-215 (SVLSASGGIRVQNQKMSTD). The helical transmembrane segment at 216–236 (VVVVVAVIILIGLFSMQHYGT) threads the bilayer. The Cytoplasmic portion of the chain corresponds to 237 to 238 (DK). Residues 239–259 (VGWLFAPIVLLWFILIGTIGA) form a helical membrane-spanning segment. The Extracellular portion of the chain corresponds to 260–289 (LNIHKYNSSVLKAYNPVYIYRYFRRGKSES). N-linked (GlcNAc...) asparagine glycosylation occurs at N266. The chain crosses the membrane as a helical span at residues 290–310 (WTSLGGIMLSITGTEALYADL). Over 311 to 315 (CHFPV) the chain is Cytoplasmic. The helical transmembrane segment at 316 to 338 (LAIQIAFTLVVFPCLLLAYTGQA) threads the bilayer. The Extracellular segment spans residues 339–359 (AYIISNKDHVVDAFYRSIPDT). Residues 360-380 (IYWPVFIIATLAAIVASQATI) form a helical membrane-spanning segment. Over 381–411 (SATYSIIKQALALGCFPRVSVVHTSKKFLGQ) the chain is Cytoplasmic. Residues 412-432 (IYIPDINWVLMILCIAVTAGF) traverse the membrane as a helical segment. Residues 433 to 444 (KNQSQIGNAYGT) are Extracellular-facing. N-linked (GlcNAc...) asparagine glycosylation is present at N434. The chain crosses the membrane as a helical span at residues 445–465 (AVVIVMLVTTFLMVPIMLLVW). The Cytoplasmic segment spans residues 466 to 468 (KSH). A helical transmembrane segment spans residues 469 to 489 (WILVVIFIVLSLMVELPYFTA). The Extracellular portion of the chain corresponds to 490–496 (CINKVDQ). The helical transmembrane segment at 497-517 (GGWVPLVVATTCFIIMYVWHF) threads the bilayer. Residues 518–793 (CTVKRYEFEM…LLNVGQIYYI (276 aa)) lie on the Cytoplasmic side of the membrane.

It belongs to the HAK/KUP transporter (TC 2.A.72.3) family.

Its subcellular location is the membrane. High-affinity potassium transporter. The polypeptide is Putative potassium transporter 12 (HAK12) (Oryza sativa subsp. japonica (Rice)).